The primary structure comprises 229 residues: Acidic leucine-rich nuclear phosphoprotein 32-related protein 1 (229 aa).

LRR repeat units lie at residues 19 to 40, 42 to 63, 64 to 85, and 90 to 110; these read TVDTLFLDNAEDGQIGGLTDQL, NLEMLSMVKCGLTTLAGFPTLP, ALTYLDISDNQLGDNASFDVLV, and DLKKITLASNKLSLDNLRCLK. The LRRCT domain maps to 124-164; the sequence is PSLGLLEDYREKMFEMIPSLKILDGCDVDGEEVEEEFAGEG. Residues 155–177 show a composition bias toward acidic residues; it reads EVEEEFAGEGGEDSEEGSGDEDG. Positions 155–229 are disordered; the sequence is EVEEEFAGEG…DNKKAAGDDE (75 aa). Positions 219-229 are enriched in basic and acidic residues; that stretch reads PDNKKAAGDDE.

The protein belongs to the ANP32 family.

This is Acidic leucine-rich nuclear phosphoprotein 32-related protein 1 from Caenorhabditis elegans.